A 101-amino-acid chain; its full sequence is Apolipoprotein C-II (101 aa).

The N-terminal stretch at 1-17 is a signal peptide; that stretch reads MGTRFLLALCLVLLVLG. A lipid binding region spans residues 66-74; that stretch reads AVDEKLRDL. The segment at 78-101 is lipoprotein lipase cofactor; the sequence is STAAMSTYTGIFTDQVLSVLKGEE.

This sequence belongs to the apolipoprotein C2 family. Proapolipoprotein C-II is synthesized as a sialic acid containing glycoprotein which is subsequently desialylated prior to its proteolytic processing. Post-translationally, proapolipoprotein C-II, the major form found in plasma undergoes proteolytic cleavage of its N-terminal hexapeptide to generate apolipoprotein C-II, which occurs as the minor form in plasma.

It localises to the secreted. Functionally, component of chylomicrons, very low-density lipoproteins (VLDL), low-density lipoproteins (LDL), and high-density lipoproteins (HDL) in plasma. Plays an important role in lipoprotein metabolism as an activator of lipoprotein lipase. Both proapolipoprotein C-II and apolipoprotein C-II can activate lipoprotein lipase. The chain is Apolipoprotein C-II (APOC2) from Chlorocebus sabaeus (Green monkey).